Consider the following 417-residue polypeptide: MLDLHYITENTEDLKKVLELRGFKEVGIIDELKSIIQRKRELQREVDLLREERNKVSKEVGRIKQSGGDITEISASVKLVGEKIKEIETKLEQEENVLININLGLPNILDPKVPNGKSEYDNVVQYEVGKIPSFSFPPKPHFEIGEALNWINFEKGVKLSGARAYTYWKDGAKLERALMNFMLDVHTKEHGYTEVWVPSMVNDESMTATGQYPKFKDEFYRIEKDELNLIPTAEVPLTNLYRDEIIPEDQLPISVTAHTSCFRREAGSYGKDTRGLVRVHQFQKVELVKFCKPEDSEEEHKKMLSHAENILKKLKLPYRVIILCSGDISANSSITYDIEVWMPGLNRFMEISSVSNFRDFQARRGKIRYKSKDGKNQLVHTINGSGLAIGRTYAAILENFQDANGTVHIPEVLKSYF.

232 to 234 (TAE) contributes to the L-serine binding site. ATP contacts are provided by residues 263–265 (RRE) and V279. E286 serves as a coordination point for L-serine. 350–353 (EISS) is a binding site for ATP. Position 385 (S385) interacts with L-serine.

It belongs to the class-II aminoacyl-tRNA synthetase family. Type-1 seryl-tRNA synthetase subfamily. As to quaternary structure, homodimer. The tRNA molecule binds across the dimer.

The protein resides in the cytoplasm. The enzyme catalyses tRNA(Ser) + L-serine + ATP = L-seryl-tRNA(Ser) + AMP + diphosphate + H(+). It carries out the reaction tRNA(Sec) + L-serine + ATP = L-seryl-tRNA(Sec) + AMP + diphosphate + H(+). It participates in aminoacyl-tRNA biosynthesis; selenocysteinyl-tRNA(Sec) biosynthesis; L-seryl-tRNA(Sec) from L-serine and tRNA(Sec): step 1/1. Functionally, catalyzes the attachment of serine to tRNA(Ser). Is also able to aminoacylate tRNA(Sec) with serine, to form the misacylated tRNA L-seryl-tRNA(Sec), which will be further converted into selenocysteinyl-tRNA(Sec). The sequence is that of Serine--tRNA ligase from Leptospira borgpetersenii serovar Hardjo-bovis (strain JB197).